Here is a 322-residue protein sequence, read N- to C-terminus: Porphobilinogen deaminase (322 aa).

Position 254 is an S-(dipyrrolylmethanemethyl)cysteine (Cys-254).

Belongs to the HMBS family. As to quaternary structure, monomer. Dipyrromethane serves as cofactor.

The catalysed reaction is 4 porphobilinogen + H2O = hydroxymethylbilane + 4 NH4(+). Its pathway is porphyrin-containing compound metabolism; protoporphyrin-IX biosynthesis; coproporphyrinogen-III from 5-aminolevulinate: step 2/4. In terms of biological role, tetrapolymerization of the monopyrrole PBG into the hydroxymethylbilane pre-uroporphyrinogen in several discrete steps. In Methylococcus capsulatus (strain ATCC 33009 / NCIMB 11132 / Bath), this protein is Porphobilinogen deaminase.